The primary structure comprises 170 residues: Crossover junction endodeoxyribonuclease RuvC (170 aa).

Active-site residues include Asp-9, Glu-70, and Asp-145. Residues Asp-9, Glu-70, and Asp-145 each coordinate Mg(2+).

Belongs to the RuvC family. In terms of assembly, homodimer which binds Holliday junction (HJ) DNA. The HJ becomes 2-fold symmetrical on binding to RuvC with unstacked arms; it has a different conformation from HJ DNA in complex with RuvA. In the full resolvosome a probable DNA-RuvA(4)-RuvB(12)-RuvC(2) complex forms which resolves the HJ. It depends on Mg(2+) as a cofactor.

The protein localises to the cytoplasm. The enzyme catalyses Endonucleolytic cleavage at a junction such as a reciprocal single-stranded crossover between two homologous DNA duplexes (Holliday junction).. Its function is as follows. The RuvA-RuvB-RuvC complex processes Holliday junction (HJ) DNA during genetic recombination and DNA repair. Endonuclease that resolves HJ intermediates. Cleaves cruciform DNA by making single-stranded nicks across the HJ at symmetrical positions within the homologous arms, yielding a 5'-phosphate and a 3'-hydroxyl group; requires a central core of homology in the junction. The consensus cleavage sequence is 5'-(A/T)TT(C/G)-3'. Cleavage occurs on the 3'-side of the TT dinucleotide at the point of strand exchange. HJ branch migration catalyzed by RuvA-RuvB allows RuvC to scan DNA until it finds its consensus sequence, where it cleaves and resolves the cruciform DNA. The polypeptide is Crossover junction endodeoxyribonuclease RuvC (Chlamydia muridarum (strain MoPn / Nigg)).